The primary structure comprises 156 residues: Acyl carrier protein, mitochondrial (156 aa).

A mitochondrion-targeting transit peptide spans 1–68 (MASRVLSAYV…GRVTQLCRQY (68 aa)). The Carrier domain occupies 77–152 (EGIQDRVLYV…EIVDYIADKK (76 aa)). N6-acetyllysine is present on Lys88. Ser112 is modified (O-(pantetheine 4'-phosphoryl)serine).

Belongs to the acyl carrier protein (ACP) family. In terms of assembly, mammalian complex I is composed of 45 different subunits. Interacts with ETFRF1. Identified in a complex composed of MALSU1, MIEF1 upstream open reading frame protein and NDUFAB1; within the trimeric complex, MIEF1 upstream open reading frame protein functions as a bridging scaffold that interacts with MALSU1 on one side, and with NDUFAB1 on the other side. The complex interacts with the mitochondrial large ribosomal subunit. Interacts with alpha-1-microglobulin chain; this interaction is required for the maintenance of mitochondrial redox homeostasis. Component of the mitochondrial core iron-sulfur cluster (ISC) complex composed of NFS1, LYRM4, NDUFAB1, ISCU, FXN, and FDX2; this complex is a heterohexamer containing two copies of each monomer. Component of the cyteine desulfurase complex composed of NFS1, LYRM4 and NDUFAB1; this complex contributes to the stability and cysteine desulfurase activity of NFS1. In terms of processing, phosphopantetheinylation at Ser-112 is essential for interactions with LYR motif-containing proteins.

The protein resides in the mitochondrion. Carrier of the growing fatty acid chain in fatty acid biosynthesis. Accessory and non-catalytic subunit of the mitochondrial membrane respiratory chain NADH dehydrogenase (Complex I), which functions in the transfer of electrons from NADH to the respiratory chain. Accessory protein, of the core iron-sulfur cluster (ISC) assembly complex, that regulates, in association with LYRM4, the stability and the cysteine desulfurase activity of NFS1 and participates in the [2Fe-2S] clusters assembly on the scaffolding protein ISCU. The core iron-sulfur cluster (ISC) assembly complex is involved in the de novo synthesis of a [2Fe-2S] cluster, the first step of the mitochondrial iron-sulfur protein biogenesis. This process is initiated by the cysteine desulfurase complex (NFS1:LYRM4:NDUFAB1) that produces persulfide which is delivered on the scaffold protein ISCU in a FXN-dependent manner. Then this complex is stabilized by FDX2 which provides reducing equivalents to accomplish the [2Fe-2S] cluster assembly. Finally, the [2Fe-2S] cluster is transferred from ISCU to chaperone proteins, including HSCB, HSPA9 and GLRX5. In Gorilla gorilla gorilla (Western lowland gorilla), this protein is Acyl carrier protein, mitochondrial.